Consider the following 352-residue polypeptide: 3-isopropylmalate dehydrogenase (352 aa).

76-89 (GYKWENLPHDKKPE) is an NAD(+) binding site. 4 residues coordinate substrate: arginine 96, arginine 106, arginine 134, and aspartate 220. Residues aspartate 220, aspartate 244, and aspartate 248 each coordinate Mg(2+). 277-289 (GSAPDIAGQNKAN) is a binding site for NAD(+).

The protein belongs to the isocitrate and isopropylmalate dehydrogenases family. LeuB type 1 subfamily. Homodimer. The cofactor is Mg(2+). Requires Mn(2+) as cofactor.

The protein localises to the cytoplasm. It catalyses the reaction (2R,3S)-3-isopropylmalate + NAD(+) = 4-methyl-2-oxopentanoate + CO2 + NADH. It participates in amino-acid biosynthesis; L-leucine biosynthesis; L-leucine from 3-methyl-2-oxobutanoate: step 3/4. Catalyzes the oxidation of 3-carboxy-2-hydroxy-4-methylpentanoate (3-isopropylmalate) to 3-carboxy-4-methyl-2-oxopentanoate. The product decarboxylates to 4-methyl-2 oxopentanoate. The polypeptide is 3-isopropylmalate dehydrogenase (Chlorobaculum tepidum (strain ATCC 49652 / DSM 12025 / NBRC 103806 / TLS) (Chlorobium tepidum)).